A 245-amino-acid polypeptide reads, in one-letter code: MGKVNKYIVEKINNGEKLHFTLIDPDRVNDLGKLEETAIKMAEFGTDAFLIGGSLGVTPEEAGETAKILKKTGLPVIIFPGNINCLTPYADAVLFMILMNSMEQYYLMHAQIAAAPIIKKYKLETLPTGYIVIYGETAVAHVGRTYPIPVSKPEILLSYTWAAEMIGIKYIYLEAGSGSPKPVPPSFPAIVKKYTNLITIVGGGIRSPFIAKELASSGADIIVTGTIVEEDPDKASKIISAIKKN.

Residues Asp-24 and Ser-54 each contribute to the Mg(2+) site. Sn-glycerol 1-phosphate contacts are provided by residues 172–178 (YLEAGSG), 203–204 (GG), and 225–226 (GT).

This sequence belongs to the GGGP/HepGP synthase family. Group II subfamily. Requires Mg(2+) as cofactor.

It localises to the cytoplasm. It carries out the reaction sn-glycerol 1-phosphate + (2E,6E,10E)-geranylgeranyl diphosphate = sn-3-O-(geranylgeranyl)glycerol 1-phosphate + diphosphate. It functions in the pathway membrane lipid metabolism; glycerophospholipid metabolism. Its function is as follows. Prenyltransferase that catalyzes the transfer of the geranylgeranyl moiety of geranylgeranyl diphosphate (GGPP) to the C3 hydroxyl of sn-glycerol-1-phosphate (G1P). This reaction is the first ether-bond-formation step in the biosynthesis of archaeal membrane lipids. The protein is Geranylgeranylglyceryl phosphate synthase of Staphylothermus marinus (strain ATCC 43588 / DSM 3639 / JCM 9404 / F1).